A 250-amino-acid polypeptide reads, in one-letter code: Probable transcriptional regulatory protein SYNPCC7002_A1640 (250 aa).

It belongs to the TACO1 family.

The protein resides in the cytoplasm. This is Probable transcriptional regulatory protein SYNPCC7002_A1640 from Picosynechococcus sp. (strain ATCC 27264 / PCC 7002 / PR-6) (Agmenellum quadruplicatum).